The following is a 304-amino-acid chain: Non-specific ribonucleoside hydrolase RihC (304 aa).

His233 is a catalytic residue.

This sequence belongs to the IUNH family. RihC subfamily.

Hydrolyzes both purine and pyrimidine ribonucleosides with a broad-substrate specificity. The polypeptide is Non-specific ribonucleoside hydrolase RihC (Escherichia coli O7:K1 (strain IAI39 / ExPEC)).